The sequence spans 575 residues: MTYRPLLNDLVDMAAGRAPVDLVVRNARIVDVFSQSIVEAPLAIGGGRFLGFFEAEAHATLDAEGRYLLPGLIDGHVHIESSLVSPAQFARLVLARGTTAVIADPHEIANVCGLAGLRYMLDATRDLPLDVRLALPSCVPATPFENAGAVLDAAALATLMDDPRVAGLGEMMNFPGVLAGDADVLDKIALALDRGKTVDGHSPGLAGRDLATYAAARIATDHECTTVEEMHERIALGMYVLLREGSAARDMARLAPGITPGNARRCVFCTDDRQPADILRDGHIDNHLRIAVSHGVDPVTAVTIATLNAAECFGLRDRGAVAPGRVADFVLVDDLTGFAVRKVYAAGRLVARDGAVVVDLPDHADPAVRDTVNIRPLDDTAFRLPLPTGLARVIGLQPHSLLTDALERDVPRDASGCFTPGDGLVKLAVVERHKATGNVGVGIIEGYGLRGGAVATTVAHDSHNIVVAGDNDADMLVAVRELERTGGGITLCAGGRVLASLPLPVAGLMSDRPATEVSETFAQMLSIAHETLHISRDIEPFMTLSFLTLPVIPALKLTDRGLFDVRTFSFTTVGV.

This sequence belongs to the metallo-dependent hydrolases superfamily. Adenine deaminase family. It depends on Mn(2+) as a cofactor.

The enzyme catalyses adenine + H2O + H(+) = hypoxanthine + NH4(+). The chain is Adenine deaminase from Nitratidesulfovibrio vulgaris (strain DP4) (Desulfovibrio vulgaris).